Here is a 217-residue protein sequence, read N- to C-terminus: ATP-dependent Clp protease proteolytic subunit (217 aa).

The active-site Nucleophile is Ser119. Residue His144 is part of the active site.

The protein belongs to the peptidase S14 family. Fourteen ClpP subunits assemble into 2 heptameric rings which stack back to back to give a disk-like structure with a central cavity, resembling the structure of eukaryotic proteasomes.

It is found in the cytoplasm. The catalysed reaction is Hydrolysis of proteins to small peptides in the presence of ATP and magnesium. alpha-casein is the usual test substrate. In the absence of ATP, only oligopeptides shorter than five residues are hydrolyzed (such as succinyl-Leu-Tyr-|-NHMec, and Leu-Tyr-Leu-|-Tyr-Trp, in which cleavage of the -Tyr-|-Leu- and -Tyr-|-Trp bonds also occurs).. Functionally, cleaves peptides in various proteins in a process that requires ATP hydrolysis. Has a chymotrypsin-like activity. Plays a major role in the degradation of misfolded proteins. This Bordetella petrii (strain ATCC BAA-461 / DSM 12804 / CCUG 43448) protein is ATP-dependent Clp protease proteolytic subunit.